A 158-amino-acid chain; its full sequence is Large ribosomal subunit protein bL17 (158 aa).

The segment at 119–158 is disordered; it reads APAAAPEAEEKGEKKAAKAPKAEKAPKAEKKPAKKAAKAE. Residues 126 to 158 show a composition bias toward basic and acidic residues; that stretch reads AEEKGEKKAAKAPKAEKAPKAEKKPAKKAAKAE.

This sequence belongs to the bacterial ribosomal protein bL17 family. In terms of assembly, part of the 50S ribosomal subunit. Contacts protein L32.

The protein is Large ribosomal subunit protein bL17 of Anaeromyxobacter sp. (strain K).